A 1218-amino-acid chain; its full sequence is Protein dispatched (1218 aa).

Residues 21-41 (YLVVVSIAVYCVACIIVALVL) traverse the membrane as a helical segment. A disordered region spans residues 99-135 (VETKLHPNHRRRKNKHKNRNKNKRRKEQNQSSHEHHD). The segment covering 104-124 (HPNHRRRKNKHKNRNKNKRRK) has biased composition (basic residues). Residues N127, N176, N197, N264, N319, and N388 are each glycosylated (N-linked (GlcNAc...) asparagine). The 195-residue stretch at 430 to 624 (AMDLGLENEL…ITWLPASVSI (195 aa)) folds into the SSD domain. The next 6 membrane-spanning stretches (helical) occupy residues 443 to 463 (LLLT…ASVW), 473 to 493 (LMSC…YAIV), 504 to 524 (LLAV…FLKI), 570 to 590 (AAAS…ASYS), 598 to 618 (CFGI…ITWL), and 670 to 690 (AYLW…IVFW). N-linked (GlcNAc...) asparagine glycosylation is found at N767, N883, and N891. Helical transmembrane passes span 975–995 (LAVL…VLTV), 996–1016 (SLSI…LNIL), 1019–1039 (IAVS…GIHY), 1058–1078 (IIGP…IMMA), and 1087–1107 (IGVF…FFLM).

This sequence belongs to the dispatched family.

It is found in the membrane. Its function is as follows. Segment polarity protein which functions in hedgehog (Hh) signaling. Regulates the trafficking and the release of cholesterol-modified hedgehog protein from cells of the posterior compartment (P cells) and is hence required for the effective production of the Hh signal. The sequence is that of Protein dispatched (disp) from Drosophila melanogaster (Fruit fly).